A 288-amino-acid polypeptide reads, in one-letter code: 4-diphosphocytidyl-2-C-methyl-D-erythritol kinase (288 aa).

The active site involves K8. 90–100 (PVGAGLAGGSS) provides a ligand contact to ATP. D132 is an active-site residue.

Belongs to the GHMP kinase family. IspE subfamily.

It catalyses the reaction 4-CDP-2-C-methyl-D-erythritol + ATP = 4-CDP-2-C-methyl-D-erythritol 2-phosphate + ADP + H(+). The protein operates within isoprenoid biosynthesis; isopentenyl diphosphate biosynthesis via DXP pathway; isopentenyl diphosphate from 1-deoxy-D-xylulose 5-phosphate: step 3/6. Its function is as follows. Catalyzes the phosphorylation of the position 2 hydroxy group of 4-diphosphocytidyl-2C-methyl-D-erythritol. This is 4-diphosphocytidyl-2-C-methyl-D-erythritol kinase from Chlamydia trachomatis serovar L2b (strain UCH-1/proctitis).